The sequence spans 182 residues: Ribosome maturation factor RimP (182 aa).

The protein belongs to the RimP family.

It localises to the cytoplasm. Functionally, required for maturation of 30S ribosomal subunits. This Corynebacterium efficiens (strain DSM 44549 / YS-314 / AJ 12310 / JCM 11189 / NBRC 100395) protein is Ribosome maturation factor RimP.